The following is a 230-amino-acid chain: Phosphoribosylformylglycinamidine synthase subunit PurQ (230 aa).

A Glutamine amidotransferase type-1 domain is found at 3–230 (SAIIVFPGTN…LFQSIVESLS (228 aa)). Cys-87 acts as the Nucleophile in catalysis. Active-site residues include His-204 and Glu-206.

Part of the FGAM synthase complex composed of 1 PurL, 1 PurQ and 2 PurS subunits.

The protein resides in the cytoplasm. It carries out the reaction N(2)-formyl-N(1)-(5-phospho-beta-D-ribosyl)glycinamide + L-glutamine + ATP + H2O = 2-formamido-N(1)-(5-O-phospho-beta-D-ribosyl)acetamidine + L-glutamate + ADP + phosphate + H(+). It catalyses the reaction L-glutamine + H2O = L-glutamate + NH4(+). The protein operates within purine metabolism; IMP biosynthesis via de novo pathway; 5-amino-1-(5-phospho-D-ribosyl)imidazole from N(2)-formyl-N(1)-(5-phospho-D-ribosyl)glycinamide: step 1/2. In terms of biological role, part of the phosphoribosylformylglycinamidine synthase complex involved in the purines biosynthetic pathway. Catalyzes the ATP-dependent conversion of formylglycinamide ribonucleotide (FGAR) and glutamine to yield formylglycinamidine ribonucleotide (FGAM) and glutamate. The FGAM synthase complex is composed of three subunits. PurQ produces an ammonia molecule by converting glutamine to glutamate. PurL transfers the ammonia molecule to FGAR to form FGAM in an ATP-dependent manner. PurS interacts with PurQ and PurL and is thought to assist in the transfer of the ammonia molecule from PurQ to PurL. This is Phosphoribosylformylglycinamidine synthase subunit PurQ from Rhodospirillum rubrum (strain ATCC 11170 / ATH 1.1.1 / DSM 467 / LMG 4362 / NCIMB 8255 / S1).